A 22-amino-acid chain; its full sequence is ATVYNNDGTQVDVGGRFDVALG.

It belongs to the Gram-negative porin family. Disulfide bond interactions within and between MOMP molecules and other components form high molecular-weight oligomers.

Its subcellular location is the cell outer membrane. Its function is as follows. Structural rigidity of the outer membrane of elementary bodies and porin forming, permitting diffusion of solutes through the intracellular reticulate body membrane. This Avibacterium gallinarum (Pasteurella gallinarum) protein is Major outer membrane protein (ompH).